The sequence spans 436 residues: ATP-dependent protease ATPase subunit HslU (436 aa).

ATP-binding positions include I18, 60–65 (GVGKTE), D249, E314, and R386.

The protein belongs to the ClpX chaperone family. HslU subfamily. In terms of assembly, a double ring-shaped homohexamer of HslV is capped on each side by a ring-shaped HslU homohexamer. The assembly of the HslU/HslV complex is dependent on binding of ATP.

The protein localises to the cytoplasm. Functionally, ATPase subunit of a proteasome-like degradation complex; this subunit has chaperone activity. The binding of ATP and its subsequent hydrolysis by HslU are essential for unfolding of protein substrates subsequently hydrolyzed by HslV. HslU recognizes the N-terminal part of its protein substrates and unfolds these before they are guided to HslV for hydrolysis. This chain is ATP-dependent protease ATPase subunit HslU, found in Chelativorans sp. (strain BNC1).